A 327-amino-acid chain; its full sequence is MESFAGKELQHSGAVHAYQLDGKGGITPIGEQDVVNSEKPCWLHLDSTVPASARWLNKTLVVPDSVRTALAGESVRPRVTRLGEGTLITLRSINLNANARPDQLVAVRVFITDKLIISTRRRKILAIDEILTDLKEGNGPTDSGNWLVSIAEALTDHTSEFIDDLHEKIIDLEDDLLEQKIPPRGELALIRKQLIVLRRYMTPQRDVFSRISGEKLPWMQDDDRRRMQEIADRLGRGLEDLDASVARTTVLSDEITALMTEAMNRRTYTMSLLAMVFLPTTFLTGLFGVNLGGIPGGDAPFGFFTFCLMLVILVGGVAWWLKRSKWL.

The Cytoplasmic segment spans residues 1–271; the sequence is MESFAGKELQ…AMNRRTYTMS (271 aa). A helical membrane pass occupies residues 272 to 292; that stretch reads LLAMVFLPTTFLTGLFGVNLG. Topologically, residues 293 to 300 are periplasmic; the sequence is GIPGGDAP. The chain crosses the membrane as a helical span at residues 301–321; it reads FGFFTFCLMLVILVGGVAWWL. Topologically, residues 322–327 are cytoplasmic; that stretch reads KRSKWL.

It belongs to the CorA metal ion transporter (MIT) (TC 1.A.35) family.

The protein localises to the cell inner membrane. It catalyses the reaction Zn(2+)(out) + H(+)(out) = Zn(2+)(in) + H(+)(in). In terms of biological role, zinc transporter. Acts as a Zn(2+):proton symporter, which likely mediates zinc ion uptake. This Pectobacterium atrosepticum (strain SCRI 1043 / ATCC BAA-672) (Erwinia carotovora subsp. atroseptica) protein is Zinc transport protein ZntB.